The sequence spans 237 residues: ADTIVAVELDTYPNTDIGDPSYPHIGIDIKSVRSKKTAKWNMQNGKVGTAHIIYNSVGKRLSAVVSYPNGDSATVSYDVDLDNVLPEWVRVGLSASTGLYKETNTILSWSFTSKLKSNSTHETNALHFMFNQFSKDQKDLILQGDATTGTDGNLELTRVSSNGSPQGNSVGRALFYAPVHIWESSAVVASFDATFTFLIKSPDSHPADGIAFFISNIDSSIPSGSTGRLLGLFPDAN.

The Mn(2+) site is built by Glu-8 and Asp-10. Ca(2+)-binding residues include Asp-10, Tyr-12, Asn-14, and Asp-19. Asn-14 provides a ligand contact to a carbohydrate. Mn(2+) is bound by residues Asp-19 and His-24. A carbohydrate is bound by residues 98–100 (GLY), Asp-208, and Arg-228.

Belongs to the leguminous lectin family. As to quaternary structure, homotetramer. Concanavalin A-like lectins of the Diocleinae subtribe undergo proteolytic processing referred to as circular permutation. The propeptide is split into an N-terminal and a C-terminal part, the gamma and beta chain, respectively. These are then religated in beta-gamma order to form the mature alpha chain. The beta and gamma chains can often be detected in cell extracts. Residues 1-118 of the mature chain, as displayed here, probably constitute the beta chain in the propeptide, residues 119-237 the gamma chain.

Its function is as follows. Glucose/D-mannose specific lectin. This is Concanavalin-A from Canavalia cathartica (Jackbean).